The sequence spans 69 residues: Large ribosomal subunit protein bL31 (69 aa).

Cys17, Cys19, Cys37, and Cys40 together coordinate Zn(2+).

This sequence belongs to the bacterial ribosomal protein bL31 family. Type A subfamily. As to quaternary structure, part of the 50S ribosomal subunit. Zn(2+) is required as a cofactor.

In terms of biological role, binds the 23S rRNA. The sequence is that of Large ribosomal subunit protein bL31 from Caldanaerobacter subterraneus subsp. tengcongensis (strain DSM 15242 / JCM 11007 / NBRC 100824 / MB4) (Thermoanaerobacter tengcongensis).